The sequence spans 265 residues: Putative cysteine-rich receptor-like protein kinase At4g11521 (265 aa).

Residues 1-23 (MMLNTLFLPIFLFFLITFDYVST) form the signal peptide. Gnk2-homologous domains are found at residues 24–122 (QTCF…NISF) and 128–241 (MEPS…LYPF). 3 N-linked (GlcNAc...) asparagine glycosylation sites follow: N34, N102, and N119. A glycan (N-linked (GlcNAc...) asparagine) is linked at N247.

This sequence belongs to the protein kinase superfamily. Ser/Thr protein kinase family. CRK subfamily.

It localises to the secreted. The protein is Putative cysteine-rich receptor-like protein kinase At4g11521 of Arabidopsis thaliana (Mouse-ear cress).